Reading from the N-terminus, the 892-residue chain is Bifunctional uridylyltransferase/uridylyl-removing enzyme (892 aa).

Positions 1–348 are uridylyltransferase; it reads MPNFTGNTRP…LVDAKVHVRP (348 aa). Residues 349-710 are uridylyl-removing; the sequence is INERFQARNG…RIHNQEPGTM (362 aa). An HD domain is found at 467–589; the sequence is VDEHTLFLIH…VGDERRLNHL (123 aa). ACT domains lie at 711-786 and 822-892; these read EVFI…LTQP and VMEL…YLER.

It belongs to the GlnD family. The cofactor is Mg(2+).

The enzyme catalyses [protein-PII]-L-tyrosine + UTP = [protein-PII]-uridylyl-L-tyrosine + diphosphate. It carries out the reaction [protein-PII]-uridylyl-L-tyrosine + H2O = [protein-PII]-L-tyrosine + UMP + H(+). With respect to regulation, uridylyltransferase (UTase) activity is inhibited by glutamine, while glutamine activates uridylyl-removing (UR) activity. Functionally, modifies, by uridylylation and deuridylylation, the PII regulatory proteins (GlnB and homologs), in response to the nitrogen status of the cell that GlnD senses through the glutamine level. Under low glutamine levels, catalyzes the conversion of the PII proteins and UTP to PII-UMP and PPi, while under higher glutamine levels, GlnD hydrolyzes PII-UMP to PII and UMP (deuridylylation). Thus, controls uridylylation state and activity of the PII proteins, and plays an important role in the regulation of nitrogen assimilation and metabolism. This chain is Bifunctional uridylyltransferase/uridylyl-removing enzyme, found in Nitrosococcus oceani (strain ATCC 19707 / BCRC 17464 / JCM 30415 / NCIMB 11848 / C-107).